The chain runs to 239 residues: Small ribosomal subunit protein uS3c (239 aa).

The KH type-2 domain occupies 43 to 139; sequence IKNYIQKNRK…RLNISIEKVK (97 aa). The tract at residues 50–80 is disordered; that stretch reads NRKKGSNRKIESDSSSEVITHNRKTDSGSSS.

Belongs to the universal ribosomal protein uS3 family. Part of the 30S ribosomal subunit.

It is found in the plastid. It localises to the chloroplast. This is Small ribosomal subunit protein uS3c (rps3) from Agrostis stolonifera (Creeping bentgrass).